Here is a 217-residue protein sequence, read N- to C-terminus: Biogenesis of lysosome-related organelles complex 1 subunit 4 (217 aa).

The interval 1–57 (MEGSFSDGGALPEGLAEEAEPQGAAWSGDSGTVSQSHSSASGPWEDEGAEDGAPGRD) is disordered. Positions 29–41 (DSGTVSQSHSSAS) are enriched in polar residues. Positions 136–165 (DRLEAFVRMVGGRVARMEEQVTKAEAELGT) form a coiled coil. Thr-165 is subject to Phosphothreonine.

The protein belongs to the BLOC1S4 family. As to quaternary structure, interacts with BLOC1S5 and BLOC1S6. Component of the biogenesis of lysosome-related organelles complex 1 (BLOC-1) composed of BLOC1S1, BLOC1S2, BLOC1S3, BLOC1S4, BLOC1S5, BLOC1S6, DTNBP1/BLOC1S7 and SNAPIN/BLOC1S8. Octamer composed of one copy each BLOC1S1, BLOC1S2, BLOC1S3, BLOC1S4, BLOC1S5, BLOC1S6, DTNBP1/BLOC1S7 and SNAPIN/BLOC1S8. The BLOC-1 complex associates with the AP-3 protein complex and membrane protein cargos.

It localises to the cytoplasm. Functionally, component of the BLOC-1 complex, a complex that is required for normal biogenesis of lysosome-related organelles (LRO), such as platelet dense granules and melanosomes. In concert with the AP-3 complex, the BLOC-1 complex is required to target membrane protein cargos into vesicles assembled at cell bodies for delivery into neurites and nerve terminals. The BLOC-1 complex, in association with SNARE proteins, is also proposed to be involved in neurite extension. Plays a role in intracellular vesicle trafficking. This chain is Biogenesis of lysosome-related organelles complex 1 subunit 4 (BLOC1S4), found in Homo sapiens (Human).